The primary structure comprises 293 residues: MTIETLSTQSKAQVLAEALRWLKQLHGRVVVIKYGGNAMTDDTLRQAFAADMAFLRNCGIHPVVVHGGGPQITAMLGKLGIEGDFKGGFRVTTPEVLDVARMVLFGQVGRELVNLINAHGPYAVGVTGEDAQLFTAVRRSVNVDGVATDIGLVGDVDHVNAAALMDLIAAHRIPVISTLAPDAEGVVHNINADTAAAAVAEALGAEKLLMLTDVEGLYTSWPDRDSLVREIDTAALEQLLPRLEAGMIPKVEGCLRAVTGGVPSAHVIDGRVEHCVLVELFTNAGTGTKVVSA.

Substrate contacts are provided by residues 68–69 (GG), Arg90, and Asn189.

The protein belongs to the acetylglutamate kinase family. ArgB subfamily.

The protein resides in the cytoplasm. The enzyme catalyses N-acetyl-L-glutamate + ATP = N-acetyl-L-glutamyl 5-phosphate + ADP. The protein operates within amino-acid biosynthesis; L-arginine biosynthesis; N(2)-acetyl-L-ornithine from L-glutamate: step 2/4. Catalyzes the ATP-dependent phosphorylation of N-acetyl-L-glutamate. The polypeptide is Acetylglutamate kinase (Mycobacterium ulcerans (strain Agy99)).